The chain runs to 157 residues: MLWVSRSVLRLGLGFTTHRAPQIISRWPRWGPRVACHPCSSSGQNPSGFEPPEKVHRIPAQYKPSKFDKKILLWTGRFKSIEDIPPLVPPEMIAVSRNKARVKACYIMIGLTIVACFAVIVSAKRAVERHESLTSWNLAKKAKWREEAALAAQSKSK.

A helical membrane pass occupies residues 104 to 123 (ACYIMIGLTIVACFAVIVSA).

This sequence belongs to the UPF0389 family.

It localises to the membrane. This is Protein FAM162B (Fam162b) from Mus musculus (Mouse).